The chain runs to 250 residues: 3-deoxy-manno-octulosonate cytidylyltransferase (250 aa).

This sequence belongs to the KdsB family.

The protein resides in the cytoplasm. It carries out the reaction 3-deoxy-alpha-D-manno-oct-2-ulosonate + CTP = CMP-3-deoxy-beta-D-manno-octulosonate + diphosphate. Its pathway is nucleotide-sugar biosynthesis; CMP-3-deoxy-D-manno-octulosonate biosynthesis; CMP-3-deoxy-D-manno-octulosonate from 3-deoxy-D-manno-octulosonate and CTP: step 1/1. It functions in the pathway bacterial outer membrane biogenesis; lipopolysaccharide biosynthesis. Activates KDO (a required 8-carbon sugar) for incorporation into bacterial lipopolysaccharide in Gram-negative bacteria. This chain is 3-deoxy-manno-octulosonate cytidylyltransferase, found in Francisella tularensis subsp. novicida (strain U112).